Here is a 95-residue protein sequence, read N- to C-terminus: Large ribosomal subunit protein bL27 (95 aa).

Positions 1–9 (MLKMNLQFF) are excised as a propeptide.

It belongs to the bacterial ribosomal protein bL27 family. Post-translationally, the N-terminus is cleaved by ribosomal processing cysteine protease Prp.

The protein is Large ribosomal subunit protein bL27 of Lachnoclostridium phytofermentans (strain ATCC 700394 / DSM 18823 / ISDg) (Clostridium phytofermentans).